A 73-amino-acid chain; its full sequence is Frenatin 3.1 (73 aa).

Positions 1–22 are cleaved as a signal peptide; sequence MHFLKKSIFLVLFLGLVSLSIC. The propeptide occupies 23–46; it reads EKEKREDQNEEEVDENEEASEEKR. The disordered stretch occupies residues 25–45; that stretch reads EKREDQNEEEVDENEEASEEK. A compositionally biased stretch (acidic residues) spans 30–42; it reads QNEEEVDENEEAS.

Expressed by the skin glands.

It is found in the secreted. Antimicrobial peptide with activity against both Gram-positive and Gram-negative bacteria. The chain is Frenatin 3.1 from Nyctimystes infrafrenatus (White-lipped tree frog).